A 474-amino-acid polypeptide reads, in one-letter code: Sialyltransferase-like protein 1 (474 aa).

Residues 1 to 14 lie on the Cytoplasmic side of the membrane; the sequence is MRSHQAGRKLPLLQ. The helical; Signal-anchor for type II membrane protein transmembrane segment at 15–35 threads the bilayer; that stretch reads LLGCVAVFSVFVFTIQSSFFA. The Lumenal portion of the chain corresponds to 36–474; it reads DNNRKLDLQP…CVRHPLKLDT (439 aa). N-linked (GlcNAc...) asparagine glycans are attached at residues asparagine 88, asparagine 120, asparagine 155, and asparagine 243. Residues 376-421 are disordered; sequence RLQRSQQPTSSKRDGSGQFGNCKVWGDADPTKGPVSGSPDMSETRK.

This sequence belongs to the glycosyltransferase 29 family. As to expression, highly expressed in inflorescences and siliques and at lower levels in roots, leaves and stems.

The protein localises to the golgi apparatus membrane. Required for normal pollen grain germination and pollen tube growth. May not be required for pollen development and female gametophytic function. The protein is Sialyltransferase-like protein 1 of Arabidopsis thaliana (Mouse-ear cress).